The following is a 477-amino-acid chain: Pyruvate kinase (477 aa).

Position 34 (R34) interacts with substrate. The K(+) site is built by N36, D64, and T65. ATP is bound at residue 36-39 (NTAH). Residues R71 and K150 each contribute to the ATP site. Residue E216 coordinates Mg(2+). 3 residues coordinate substrate: G239, D240, and T272. D240 is a Mg(2+) binding site.

It belongs to the pyruvate kinase family. As to quaternary structure, homotetramer. Mg(2+) serves as cofactor. The cofactor is K(+).

It catalyses the reaction pyruvate + ATP = phosphoenolpyruvate + ADP + H(+). The protein operates within carbohydrate degradation; glycolysis; pyruvate from D-glyceraldehyde 3-phosphate: step 5/5. The polypeptide is Pyruvate kinase (pyk) (Borreliella burgdorferi (strain ATCC 35210 / DSM 4680 / CIP 102532 / B31) (Borrelia burgdorferi)).